The following is a 122-amino-acid chain: Large ribosomal subunit protein uL14 (122 aa).

This sequence belongs to the universal ribosomal protein uL14 family. Part of the 50S ribosomal subunit. Forms a cluster with proteins L3 and L19. In the 70S ribosome, L14 and L19 interact and together make contacts with the 16S rRNA in bridges B5 and B8.

Functionally, binds to 23S rRNA. Forms part of two intersubunit bridges in the 70S ribosome. The chain is Large ribosomal subunit protein uL14 from Brevibacillus brevis (strain 47 / JCM 6285 / NBRC 100599).